Consider the following 194-residue polypeptide: uncharacterized protein (194 aa).

This is an uncharacterized protein from Acanthamoeba polyphaga (Amoeba).